The sequence spans 499 residues: Glutamyl-tRNA(Gln) amidotransferase subunit A (499 aa).

Active-site charge relay system residues include lysine 76 and serine 151. Serine 175 functions as the Acyl-ester intermediate in the catalytic mechanism.

It belongs to the amidase family. GatA subfamily. Heterotrimer of A, B and C subunits.

The enzyme catalyses L-glutamyl-tRNA(Gln) + L-glutamine + ATP + H2O = L-glutaminyl-tRNA(Gln) + L-glutamate + ADP + phosphate + H(+). Its function is as follows. Allows the formation of correctly charged Gln-tRNA(Gln) through the transamidation of misacylated Glu-tRNA(Gln) in organisms which lack glutaminyl-tRNA synthetase. The reaction takes place in the presence of glutamine and ATP through an activated gamma-phospho-Glu-tRNA(Gln). The chain is Glutamyl-tRNA(Gln) amidotransferase subunit A from Rhodopirellula baltica (strain DSM 10527 / NCIMB 13988 / SH1).